Reading from the N-terminus, the 464-residue chain is JmjC domain-containing protein 1 (464 aa).

The JmjC domain maps to 182–349; sequence LYAKDMHLFR…QMYTALKEQY (168 aa).

The protein is JmjC domain-containing protein 1 (jmj1) of Schizosaccharomyces pombe (strain 972 / ATCC 24843) (Fission yeast).